Reading from the N-terminus, the 72-residue chain is Putative membrane protein insertion efficiency factor (72 aa).

This sequence belongs to the UPF0161 family.

Its subcellular location is the cell inner membrane. Functionally, could be involved in insertion of integral membrane proteins into the membrane. This chain is Putative membrane protein insertion efficiency factor, found in Trichodesmium erythraeum (strain IMS101).